The chain runs to 186 residues: piRNA-mediated silencing protein C19orf84 (186 aa).

2 disordered regions span residues 1 to 42 and 89 to 186; these read MEQP…NSTD and SQAG…ETEY. The segment covering 13-22 has biased composition (polar residues); it reads NNLSLPSSGT. Residues 24–36 are compositionally biased toward pro residues; it reads PWPPAPLPAPPPL. The span at 114 to 126 shows a compositional bias: basic residues; it reads RPGWGRGLHRRGL. The span at 145-157 shows a compositional bias: pro residues; the sequence is RTPPMTLPSPPTL.

Interacts with SPOCD1.

The protein localises to the nucleus. It localises to the nucleoplasm. In terms of biological role, protein adapter involved in piRNA-directed transposon methylation by connecting PIWIL4-piRNA and DNA methylation machineries. The PIWIL4-piRNA pathway plays a central role during spermatogenesis by directing transposon DNA methylation and silencing, thereby preventing their mobilization, which is essential for the germline integrity. In Homo sapiens (Human), this protein is piRNA-mediated silencing protein C19orf84.